The sequence spans 728 residues: FYN-binding protein 2 (728 aa).

3 disordered regions span residues glutamine 17–proline 76, glutamine 250–isoleucine 287, and proline 367–proline 390. Polar residues predominate over residues glycine 42–glutamine 75. A compositionally biased stretch (pro residues) spans glycine 276–proline 285. Positions serine 377–proline 390 are enriched in basic and acidic residues. Tyrosine 491 is modified (phosphotyrosine). Residues tyrosine 521–valine 524 carry the SH2-binding; to LCP2 motif. A Phosphotyrosine modification is found at tyrosine 587. Positions isoleucine 664–glutamine 724 constitute an SH3 domain.

Interacts with SKAP1, LCK and FYN. The phosphorylated form interacts with LCP2. Phosphorylation is required for its function in T-cell activation. In terms of tissue distribution, expressed in T-cells (at protein level). Widely expressed.

The protein localises to the membrane raft. In terms of biological role, adapter protein that plays a role in T-cell receptor (TCR)-mediated activation of signaling pathways. Required for T-cell activation and integrin-mediated T-cell adhesion in response to TCR stimulation. The sequence is that of FYN-binding protein 2 from Homo sapiens (Human).